Here is a 90-residue protein sequence, read N- to C-terminus: Sec-independent protein translocase protein TatA (90 aa).

The chain crosses the membrane as a helical span at residues 1 to 21 (MGISPWTLLIVLLIVLLVFGT). 2 stretches are compositionally biased toward basic and acidic residues: residues 42 to 59 (MKEG…EPSK) and 70 to 90 (SGEG…RHSS). The interval 42–90 (MKEGEEGAKEGEKSEPSKLEQPPEEEKESGEGHTIEGERSEQPRDRHSS) is disordered.

The protein belongs to the TatA/E family. In terms of assembly, the Tat system comprises two distinct complexes: a TatABC complex, containing multiple copies of TatA, TatB and TatC subunits, and a separate TatA complex, containing only TatA subunits. Substrates initially bind to the TatABC complex, which probably triggers association of the separate TatA complex to form the active translocon.

It localises to the cell inner membrane. Functionally, part of the twin-arginine translocation (Tat) system that transports large folded proteins containing a characteristic twin-arginine motif in their signal peptide across membranes. TatA could form the protein-conducting channel of the Tat system. The polypeptide is Sec-independent protein translocase protein TatA (Alkalilimnicola ehrlichii (strain ATCC BAA-1101 / DSM 17681 / MLHE-1)).